We begin with the raw amino-acid sequence, 204 residues long: ATP phosphoribosyltransferase (204 aa).

The protein belongs to the ATP phosphoribosyltransferase family. Short subfamily. As to quaternary structure, heteromultimer composed of HisG and HisZ subunits.

The protein resides in the cytoplasm. The catalysed reaction is 1-(5-phospho-beta-D-ribosyl)-ATP + diphosphate = 5-phospho-alpha-D-ribose 1-diphosphate + ATP. It participates in amino-acid biosynthesis; L-histidine biosynthesis; L-histidine from 5-phospho-alpha-D-ribose 1-diphosphate: step 1/9. Catalyzes the condensation of ATP and 5-phosphoribose 1-diphosphate to form N'-(5'-phosphoribosyl)-ATP (PR-ATP). Has a crucial role in the pathway because the rate of histidine biosynthesis seems to be controlled primarily by regulation of HisG enzymatic activity. The protein is ATP phosphoribosyltransferase of Staphylococcus aureus (strain MRSA252).